The sequence spans 105 residues: MKMIRAVVRPSKAEEVVDALAESGCVALTKMDVIGRGKQKGIKIDQIYYDELPKTMLMLVVEDDAAENVIELITKTAYTGSFGDGKIFVSPVDEAYTVRTRSCGL.

It belongs to the P(II) protein family.

Could be involved in the regulation of nitrogen fixation. This chain is Nitrogen fixation nifHD region glnB-like protein 1 (glnBI), found in Methanococcus maripaludis (strain DSM 14266 / JCM 13030 / NBRC 101832 / S2 / LL).